Reading from the N-terminus, the 313-residue chain is Porphobilinogen deaminase (313 aa).

Cysteine 242 carries the S-(dipyrrolylmethanemethyl)cysteine modification.

The protein belongs to the HMBS family. As to quaternary structure, monomer. It depends on dipyrromethane as a cofactor.

It catalyses the reaction 4 porphobilinogen + H2O = hydroxymethylbilane + 4 NH4(+). It functions in the pathway porphyrin-containing compound metabolism; protoporphyrin-IX biosynthesis; coproporphyrinogen-III from 5-aminolevulinate: step 2/4. Its function is as follows. Tetrapolymerization of the monopyrrole PBG into the hydroxymethylbilane pre-uroporphyrinogen in several discrete steps. The chain is Porphobilinogen deaminase from Escherichia coli O6:H1 (strain CFT073 / ATCC 700928 / UPEC).